Here is an 800-residue protein sequence, read N- to C-terminus: Phosphate transporter PHO1 homolog 9 (800 aa).

The SPX domain maps to 1–346 (MKFGREFETQ…SRNASKPYLN (346 aa)). The Cytoplasmic segment spans residues 1-398 (MKFGREFETQ…KTKREKHRIT (398 aa)). 3 disordered regions span residues 38-77 (QKQQ…PGLS), 91-119 (NRAS…HNHH), and 212-234 (PDLN…PAPS). Over residues 42 to 51 (RPPPPPPPPS) the composition is skewed to pro residues. Gly residues predominate over residues 63–75 (GEGGGGGGGGGPG). Residues 95–119 (RSPKKSHKHHNPLSSKRHHHHHNHH) are compositionally biased toward basic residues. Positions 216–229 (SVASAPSSPHSTMR) are enriched in polar residues. The chain crosses the membrane as a helical span at residues 399–419 (YFLGFFSGCAVALAIAITVLV). Residues 420–439 (HIRGLTKSEGRHQYMENIFP) are Extracellular-facing. A helical membrane pass occupies residues 440–460 (LYSLFGFVAVHLFMYAADIYF). Residues 461–483 (WSRYRVNYPFIFGFEQGNDLGYR) lie on the Cytoplasmic side of the membrane. A helical transmembrane segment spans residues 484 to 504 (EVLLVGSGLAVLTFGGVISNL). At 505-520 (DMEMDPRTKSFSVITE) the chain is on the extracellular side. A helical membrane pass occupies residues 521–541 (LVPLALLVCLMMVLFCPFNII). At 542-670 (YRSSRYFFVG…IFEMKRGTYW (129 aa)) the chain is on the cytoplasmic side. Residues 606 to 800 (YDSEIYKELY…FQELGGSKSV (195 aa)) enclose the EXS domain. The helical transmembrane segment at 671-691 (LTVAVTTSSIATLFNTYWDIF) threads the bilayer. Topologically, residues 692–718 (RDWGLMNRNSKNPWLRDKLLVPYKSIY) are extracellular. The chain crosses the membrane as a helical span at residues 719–739 (FIVMVANVVLRLAWMQTVLGI). Residues 740 to 800 (KEAPFLHKRA…FQELGGSKSV (61 aa)) lie on the Cytoplasmic side of the membrane.

It belongs to the SYG1 (TC 2.A.94) family. In terms of tissue distribution, specifically expressed in pollen grains.

It localises to the cell membrane. In terms of biological role, may transport inorganic phosphate (Pi). This chain is Phosphate transporter PHO1 homolog 9 (PHO1-H9), found in Arabidopsis thaliana (Mouse-ear cress).